The chain runs to 748 residues: Phytochrome-like protein Cph1 (748 aa).

Residues 19–86 enclose the PAS domain; that stretch reads AIHTAHLIQP…IQSRLTAGQI (68 aa). The tract at residues 87–510 is chromophore binding domain; the sequence is SSLNPSKLWA…KKAIVNLILR (424 aa). The GAF domain maps to 152 to 320; sequence NLRDFYDVIV…VVFSNISAQE (169 aa). A tetrapyrrole is bound at residue C259. The 214-residue stretch at 535 to 748 folds into the Histidine kinase domain; sequence IASHDLQEPL…TFYFSIPIGN (214 aa). Position 538 is a phosphohistidine; by autocatalysis (H538).

This sequence in the N-terminal section; belongs to the phytochrome family. In terms of assembly, homodimer. In terms of processing, contains one covalently linked tetrapyrrole chromophore.

It catalyses the reaction ATP + protein L-histidine = ADP + protein N-phospho-L-histidine.. Functionally, regulatory photoreceptor which exists in two forms that are reversibly interconvertible by light: the R form that absorbs maximally in the red region of the spectrum and the FR form that absorbs maximally in the far-red region. Also has a slight blue shift for the far-red maximum. Forms a two-component system with the Rrcp1 response regulator. This Synechocystis sp. (strain ATCC 27184 / PCC 6803 / Kazusa) protein is Phytochrome-like protein Cph1 (cph1).